A 491-amino-acid chain; its full sequence is Protein OrfX3 (491 aa).

This sequence belongs to the TULIP P47 family. As to quaternary structure, heterodimer of OrfX1 and OrfX3; crystallizes as a dimer of heterodimers.

Expression of the ptox operon (ntnh-orfX1-orfX2-orfX3-pmp1) in B.thuringiensis kills Anopheles but not Aedes mosquito 3rd instar larvae. The ntnh-pmp1 construct is about half as toxic. The sequence is that of Protein OrfX3 from Paraclostridium bifermentans (Clostridium bifermentans).